Reading from the N-terminus, the 91-residue chain is Bombyxin C-1 (91 aa).

The signal sequence occupies residues 1 to 19 (MKLVMLLVVVSAMLVLGGA). Gln-20 carries the pyrrolidone carboxylic acid modification. 3 disulfide bridges follow: Cys-27–Cys-76, Cys-39–Cys-89, and Cys-75–Cys-80. A propeptide spans 47–67 (SGSQYAGYGWPWLPPFSSSRG) (c peptide like).

Belongs to the insulin family. In terms of assembly, heterodimer of a B chain and an A chain linked by two disulfide bonds.

It is found in the secreted. Brain peptide responsible for activation of prothoracic glands to produce ecdysone in insects. The polypeptide is Bombyxin C-1 (BBXC1) (Bombyx mori (Silk moth)).